The primary structure comprises 279 residues: Tryptophan 2,3-dioxygenase (279 aa).

Residues 48–52 (FIVIH), Tyr110, and Arg114 contribute to the substrate site. His237 provides a ligand contact to heme. Thr251 contacts substrate.

The protein belongs to the tryptophan 2,3-dioxygenase family. As to quaternary structure, homotetramer. Requires heme as cofactor.

The enzyme catalyses L-tryptophan + O2 = N-formyl-L-kynurenine. Its pathway is amino-acid degradation; L-tryptophan degradation via kynurenine pathway; L-kynurenine from L-tryptophan: step 1/2. Its function is as follows. Heme-dependent dioxygenase that catalyzes the oxidative cleavage of the L-tryptophan (L-Trp) pyrrole ring and converts L-tryptophan to N-formyl-L-kynurenine. Catalyzes the oxidative cleavage of the indole moiety. The protein is Tryptophan 2,3-dioxygenase of Bacillus anthracis.